Here is a 464-residue protein sequence, read N- to C-terminus: ERO1-like protein alpha (464 aa).

The signal sequence occupies residues 1 to 23 (MGRGWGLLVGLLGVVWLLRSGQG). 8 disulfide bridges follow: C35–C48, C37–C46, C85–C387, C94–C99, C94–C130, C99–C104, C207–C237, and C390–C393. Residues S106, S142, and S144 each carry the phosphoserine modification. FAD is bound by residues R186, T188, and W199. Residues S248 and H251 each contribute to the FAD site. A glycan (N-linked (GlcNAc...) asparagine) is linked at N276. FAD is bound by residues R283 and R296. N380 is a glycosylation site (N-linked (GlcNAc...) asparagine).

Belongs to the EROs family. As to quaternary structure, predominantly monomer. May function both as a monomer and a homodimer. Interacts with PDILT. Interacts with ERP44; the interaction results in retention of ERO1A in the endoplasmic reticulum. Requires FAD as cofactor. In terms of processing, N-glycosylated. Post-translationally, the Cys-94/Cys-99 and Cys-390/Cys-393 disulfide bonds constitute the redox-active center. The Cys-94/Cys-99 disulfide bond may accept electron from P4HB and funnel them to the active site disulfide Cys-390/Cys-393. The regulatory Cys-99/Cys-104 disulfide bond stabilizes the other regulatory bond Cys-94/Cys-130. Phosphorylated on Ser-144 by FAM20C in the Golgi which increases its enzymatic activity. Phosphorylation is induced by lactation. It is also induced by hypoxia and reductive stress.

The protein localises to the endoplasmic reticulum membrane. The protein resides in the golgi apparatus lumen. It is found in the secreted. It localises to the cell projection. Its subcellular location is the dendrite. Enzyme activity is tightly regulated to prevent the accumulation of reactive oxygen species in the endoplasmic reticulum. Reversibly down-regulated by the formation of disulfide bonds between the active site Cys-94 and Cys-130, and between Cys-99 and Cys-104. Glutathione may be required to regulate its activity in the endoplasmic reticulum. Functionally, oxidoreductase involved in disulfide bond formation in the endoplasmic reticulum. Efficiently reoxidizes P4HB/PDI, the enzyme catalyzing protein disulfide formation, in order to allow P4HB to sustain additional rounds of disulfide formation. Following P4HB reoxidation, passes its electrons to molecular oxygen via FAD, leading to the production of reactive oxygen species (ROS) in the cell. Required for the proper folding of immunoglobulins. Plays an important role in ER stress-induced, CHOP-dependent apoptosis by activating the inositol 1,4,5-trisphosphate receptor IP3R1. The polypeptide is ERO1-like protein alpha (Rattus norvegicus (Rat)).